Here is a 460-residue protein sequence, read N- to C-terminus: Nuclear distribution protein PAC1 (460 aa).

The LisH domain occupies 9–41; it reads QAEELHKSIIAYLAANNLQDSANAMRTELGLGE. A coiled-coil region spans residues 61–88; the sequence is TSVVRLQKKIMDLEAQTQTLQTELNSAT. The span at 82-92 shows a compositional bias: polar residues; that stretch reads TELNSATPTSN. A disordered region spans residues 82-105; that stretch reads TELNSATPTSNRRGDPSSWLPAGP. WD repeat units follow at residues 112–153, 155–195, 199–246, 249–288, 293–354, 355–394, and 399–456; these read SHRT…RTVK, HTKA…QNIR, GHDH…CVKT, GHADWIRDVSPSLDGKYLLSTGNDRTVRLWDISVPNPEAK, GHEH…KTLI, GHDNWVRGLVFHPSGKFLLSVSDDKTIRCWDLSQEGKCVK, and SHEH…MSLR. A disordered region spans residues 414 to 433; it reads IKDKGPGEETNGDVGTPKKA.

The protein belongs to the WD repeat LIS1/nudF family. As to quaternary structure, self-associates. Interacts with NDL1 and dynein.

It is found in the cytoplasm. The protein resides in the cytoskeleton. The protein localises to the spindle pole. Positively regulates the activity of the minus-end directed microtubule motor protein dynein. May enhance dynein-mediated microtubule sliding by targeting dynein to the microtubule plus end. Required for nuclear migration during vegetative growth as well as development. Required for retrograde early endosome (EE) transport from the hyphal tip. Required for localization of dynein to the mitotic spindle poles. Recruits additional proteins to the dynein complex at SPBs. This Gibberella zeae (strain ATCC MYA-4620 / CBS 123657 / FGSC 9075 / NRRL 31084 / PH-1) (Wheat head blight fungus) protein is Nuclear distribution protein PAC1.